Reading from the N-terminus, the 56-residue chain is Large ribosomal subunit protein bL32 (56 aa).

Residues 1–28 are disordered; that stretch reads MAVQQNRKTRSKRGMRRSHDALTTAALS. Positions 7–16 are enriched in basic residues; sequence RKTRSKRGMR.

This sequence belongs to the bacterial ribosomal protein bL32 family.

In Vibrio vulnificus (strain CMCP6), this protein is Large ribosomal subunit protein bL32.